A 505-amino-acid chain; its full sequence is Deoxyguanosinetriphosphate triphosphohydrolase (505 aa).

The region spanning 66-273 (RLTHSMEVQQ…MEAADDISYC (208 aa)) is the HD domain.

This sequence belongs to the dGTPase family. Type 1 subfamily. Homotetramer. Requires Mg(2+) as cofactor.

The enzyme catalyses dGTP + H2O = 2'-deoxyguanosine + triphosphate + H(+). Its function is as follows. dGTPase preferentially hydrolyzes dGTP over the other canonical NTPs. This is Deoxyguanosinetriphosphate triphosphohydrolase from Escherichia fergusonii (strain ATCC 35469 / DSM 13698 / CCUG 18766 / IAM 14443 / JCM 21226 / LMG 7866 / NBRC 102419 / NCTC 12128 / CDC 0568-73).